The primary structure comprises 838 residues: Periplasmic nitrate reductase (838 aa).

Residues 1-29 (MKVSRRAFIKQTAAAATASVAGVTLPAGA) constitute a signal peptide (tat-type signal). Positions 41 to 97 (LKWSKAPCRFCGTGCGVEVAVKDNRVVATQGDPKAEVNRGLNCVKGYFLSKIMYGKD) constitute a 4Fe-4S Mo/W bis-MGD-type domain. [4Fe-4S] cluster is bound by residues cysteine 48, cysteine 51, cysteine 55, and cysteine 83. Mo-bis(molybdopterin guanine dinucleotide) is bound by residues lysine 85, glutamine 152, asparagine 177, cysteine 181, 214–221 (WGSNMAEM), 245–249 (STFTH), methionine 382, glutamine 386, asparagine 492, 518–519 (SD), lysine 541, aspartate 568, and 728–737 (TGRVLEHWHS). Tryptophan 804 is a binding site for substrate. Mo-bis(molybdopterin guanine dinucleotide) contacts are provided by asparagine 812 and lysine 829.

Belongs to the prokaryotic molybdopterin-containing oxidoreductase family. NasA/NapA/NarB subfamily. In terms of assembly, component of the periplasmic nitrate reductase NapAB complex composed of NapA and NapB. Requires [4Fe-4S] cluster as cofactor. It depends on Mo-bis(molybdopterin guanine dinucleotide) as a cofactor. Predicted to be exported by the Tat system. The position of the signal peptide cleavage has not been experimentally proven.

It is found in the periplasm. The catalysed reaction is 2 Fe(II)-[cytochrome] + nitrate + 2 H(+) = 2 Fe(III)-[cytochrome] + nitrite + H2O. Catalytic subunit of the periplasmic nitrate reductase complex NapAB. Receives electrons from NapB and catalyzes the reduction of nitrate to nitrite. This chain is Periplasmic nitrate reductase, found in Ralstonia pickettii (strain 12J).